We begin with the raw amino-acid sequence, 132 residues long: Small ribosomal subunit protein uS8 (132 aa).

The protein belongs to the universal ribosomal protein uS8 family. As to quaternary structure, part of the 30S ribosomal subunit. Contacts proteins S5 and S12.

One of the primary rRNA binding proteins, it binds directly to 16S rRNA central domain where it helps coordinate assembly of the platform of the 30S subunit. In Xanthobacter autotrophicus (strain ATCC BAA-1158 / Py2), this protein is Small ribosomal subunit protein uS8.